The sequence spans 355 residues: MGGKTFMLMAGGTGGHIFPALAVADSLRVRGHHVIWLGSKDSMEERIVPQYGIRLETLAIKGIRGNGIKRKLMLPFTLYKTVREAQRIIRKHRVECVIGFGGFVTFPGGLAAKLLGVPIVIHEQNAVAGLSNRHLSRWAKRVLYAFPKAFSHEGGLVGNPVRADISNLPVPAERFQGREGRLKILVVGGSLGADVLNKTVPQALALLPEEVRPQMYHQSGRNKLGNLQADYDALGVKAECVEFITDMVSAYRDADLVICRAGALTIAELTAAGLGALLVPYPHAVDDHQTANARFMVQAEAGLLLPQTQLTAEKLAEILGSLNREKCLKWAENARTLALPHSADDVAEAAIACAA.

UDP-N-acetyl-alpha-D-glucosamine is bound by residues Thr13–Gly15, Asn125, Arg162, Ser190, Ile244, and Gln289.

Belongs to the glycosyltransferase 28 family. MurG subfamily.

It is found in the cell inner membrane. The catalysed reaction is di-trans,octa-cis-undecaprenyl diphospho-N-acetyl-alpha-D-muramoyl-L-alanyl-D-glutamyl-meso-2,6-diaminopimeloyl-D-alanyl-D-alanine + UDP-N-acetyl-alpha-D-glucosamine = di-trans,octa-cis-undecaprenyl diphospho-[N-acetyl-alpha-D-glucosaminyl-(1-&gt;4)]-N-acetyl-alpha-D-muramoyl-L-alanyl-D-glutamyl-meso-2,6-diaminopimeloyl-D-alanyl-D-alanine + UDP + H(+). It functions in the pathway cell wall biogenesis; peptidoglycan biosynthesis. Its function is as follows. Cell wall formation. Catalyzes the transfer of a GlcNAc subunit on undecaprenyl-pyrophosphoryl-MurNAc-pentapeptide (lipid intermediate I) to form undecaprenyl-pyrophosphoryl-MurNAc-(pentapeptide)GlcNAc (lipid intermediate II). The polypeptide is UDP-N-acetylglucosamine--N-acetylmuramyl-(pentapeptide) pyrophosphoryl-undecaprenol N-acetylglucosamine transferase (Neisseria gonorrhoeae (strain ATCC 700825 / FA 1090)).